Here is a 433-residue protein sequence, read N- to C-terminus: DNA polymerase processivity factor (433 aa).

A disordered region spans residues 274 to 433 (RGDPFDKNYV…VPNTKKQKCG (160 aa)). Residues 298 to 307 (SLSSLANAGG) show a composition bias toward low complexity. 2 stretches are compositionally biased toward gly residues: residues 325–336 (GLGGLGGGGGGG) and 344–359 (GGGG…GGGG). The segment covering 360–376 (GDHDHGLSSKEKYEQHK) has biased composition (basic and acidic residues). Residues 385–398 (GGSGGGGGGGGGGL) are compositionally biased toward gly residues.

This sequence belongs to the herpesviridae polymerase accessory protein family. In terms of assembly, forms homodimers. Interacts with host SMARCB1. Interacts with host NCL/nucleolin; this interaction is important for the organization of proteins within viral replication compartments. Interacts with UL112/UL113; this interaction is necessary for efficient viral DNA replication. Interacts with UL84. Interacts with the uracil DNA glycosylase UL114. Interacts with the DNA polymerase catalytic subunit UL54. Interacts with host IRF3. Interacts with host RELA. In terms of processing, phosphorylated by UL97 on serine residues, phosphorylation seems important for UL44 nuclear entry but does not directly affect its role in replication. Sumoylated. Sumoylation on Lys-410 increases viral DNA replication.

The protein resides in the virion. It localises to the host nucleus. Functionally, accessory subunit of the DNA polymerase that plays an essential role in viral DNA replication and acts by increasing the processivity of polymerization. Forms dimers that binds to double-stranded DNA and UL54 specifically to stimulates long chain DNA synthesis efficiently. Plays an important role in maintaining the structure of viral replication compartments by interacting with host nucleolin/NUC. In addition, suppresses innate immune responses through effects on host IRF3 and NF-kappa-B. Mechanistically, interfere with the binding of IRF3 and the p65 NF-kappa-B subunit to the promoters of antiviral genes, thereby inhibiting the expression of these genes. The protein is DNA polymerase processivity factor (UL44) of Human cytomegalovirus (strain Merlin) (HHV-5).